The following is a 205-amino-acid chain: Putative glutamine amidotransferase-like protein L716 (205 aa).

The 176-residue stretch at 1-176 folds into the Glutamine amidotransferase type-1 domain; sequence MLLIIQNGYI…SNHIESYDYA (176 aa). Catalysis depends on for GATase activity residues C82, H155, and D157.

The protein is Putative glutamine amidotransferase-like protein L716 of Acanthamoeba polyphaga mimivirus (APMV).